A 160-amino-acid chain; its full sequence is Eukaryotic translation initiation factor 5A-1/2 (160 aa).

A compositionally biased stretch (basic and acidic residues) spans 1-12 (MSDEEHHFESKA). The tract at residues 1–21 (MSDEEHHFESKADAGASKTYP) is disordered. Lys-52 is subject to Hypusine.

It belongs to the eIF-5A family. Lys-52 undergoes hypusination, a unique post-translational modification that consists in the addition of a butylamino group from spermidine to lysine side chain, leading to the formation of the unusual amino acid hypusine. eIF-5As are the only known proteins to undergo this modification, which is essential for their function.

Functionally, translation factor that promotes translation elongation and termination, particularly upon ribosome stalling at specific amino acid sequence contexts. Binds between the exit (E) and peptidyl (P) site of the ribosome and promotes rescue of stalled ribosome: specifically required for efficient translation of polyproline-containing peptides as well as other motifs that stall the ribosome. Acts as a ribosome quality control (RQC) cofactor by joining the RQC complex to facilitate peptidyl transfer during CAT tailing step. This Solanum tuberosum (Potato) protein is Eukaryotic translation initiation factor 5A-1/2 (EIF5A1).